A 272-amino-acid polypeptide reads, in one-letter code: NH(3)-dependent NAD(+) synthetase (272 aa).

45 to 52 (GISGGQDS) serves as a coordination point for ATP. Asp-51 is a Mg(2+) binding site. Arg-138 is a deamido-NAD(+) binding site. Thr-158 contacts ATP. Glu-163 is a binding site for Mg(2+). Deamido-NAD(+) contacts are provided by Lys-171 and Asp-178. Lys-187 and Thr-209 together coordinate ATP. Position 258–259 (258–259 (HK)) interacts with deamido-NAD(+).

The protein belongs to the NAD synthetase family. Homodimer.

It carries out the reaction deamido-NAD(+) + NH4(+) + ATP = AMP + diphosphate + NAD(+) + H(+). It functions in the pathway cofactor biosynthesis; NAD(+) biosynthesis; NAD(+) from deamido-NAD(+) (ammonia route): step 1/1. Its function is as follows. Catalyzes the ATP-dependent amidation of deamido-NAD to form NAD. Uses ammonia as a nitrogen source. This chain is NH(3)-dependent NAD(+) synthetase, found in Bacillus cereus (strain G9842).